The following is a 553-amino-acid chain: Phospholipase B-like 1 (553 aa).

Positions 1-38 are cleaved as a signal peptide; it reads MTRGGPGGRPGLPQPPPLLLLLLLLPLLLVTAEPPKPA. N71 carries an N-linked (GlcNAc...) (high mannose) asparagine; alternate glycan. An N-linked (GlcNAc...) (hybrid) asparagine; alternate glycan is attached at N71. Residues 209–227 constitute a propeptide, removed in mature form; it reads LSPTKNGSLKVFKRWDMGH. N-linked (GlcNAc...) (high mannose) asparagine; alternate glycosylation is found at N308 and N366. N-linked (GlcNAc...) (hybrid) asparagine; alternate glycosylation is found at N308 and N366. N-linked (GlcNAc...) asparagine glycosylation is present at N411. 2 disulfide bridges follow: C470–C475 and C474–C489. The N-linked (GlcNAc...) (high mannose) asparagine; alternate glycan is linked to N526. The N-linked (GlcNAc...) (hybrid) asparagine; alternate glycan is linked to N526.

It belongs to the phospholipase B-like family. May form a homodimer, each monomer is composed of a chain A and a chain B. In terms of processing, the maturation cleavages that produces chains A and B are required to open the putative substrate binding pocket. Both chains A and B remain associated in the mature protein. In terms of tissue distribution, expressed in neutrophils and monocytes.

It is found in the lysosome. Functionally, in view of the small size of the putative binding pocket, it has been proposed that it may act as an amidase or a peptidase. Exhibits a weak phospholipase activity, acting on various phospholipids, including phosphatidylcholine, phosphatidylinositol, phosphatidylethanolamine and lysophospholipids. This is Phospholipase B-like 1 (PLBD1) from Homo sapiens (Human).